Consider the following 177-residue polypeptide: Protein GrpE (177 aa).

The protein belongs to the GrpE family. As to quaternary structure, homodimer. The cofactor is K(+).

It is found in the cytoplasm. Its function is as follows. Participates actively in the response to hyperosmotic and heat shock by preventing the aggregation of stress-denatured proteins, in association with DnaK and GrpE. It is the nucleotide exchange factor for DnaK and may function as a thermosensor. Unfolded proteins bind initially to DnaJ; upon interaction with the DnaJ-bound protein, DnaK hydrolyzes its bound ATP, resulting in the formation of a stable complex. GrpE releases ADP from DnaK; ATP binding to DnaK triggers the release of the substrate protein, thus completing the reaction cycle. Several rounds of ATP-dependent interactions between DnaJ, DnaK and GrpE are required for fully efficient folding. This chain is Protein GrpE, found in Thermus thermophilus (strain ATCC 27634 / DSM 579 / HB8).